A 465-amino-acid chain; its full sequence is MTTQLQPVVTVTPPLPTRRNAELLLLGFAAVITVAALAIVEANQERNFRWYLAGYGLIFWSLFASAHLAIRRFAPYTDPLLLPIVALLNGLGLVMIHRLDLVDNDVTGHHHTSAAQQMLWTLVGVAAFVLVMTVLKDHRQLARYGYISGLTGLVFLAIPAPLPEQNGAKIWIRFPGFSIQPAEFSKILLLIFFAAVLVAKRSLFTSAGKHLIGMTLPRPRDLAPLLAAWVISVSVMVFEKDLGTSLLLYASFLVVVYLATQRLSWVIIGLVLFTAGSTIAYFTFEHIRVRMQVWWDPFTNLDVGGYQIVQSLFSFATGGIFGTGLGNGQPDAIPAASTDFIIAVFGEELGLVGLAALLMLYTIVIVRGLRTAIATRDSFGKLLAAGLASTLAIQLFIVSGGVTTLIPLTGLTTPWMSYGGSSLLANYVLLAILARISHSARHPLRSRPHNTSPIAVASTEVIERV.

The next 13 helical transmembrane spans lie at 21-41 (AELL…AIVE), 50-70 (WYLA…HLAI), 76-96 (YTDP…LVMI), 115-135 (AQQM…MTVL), 144-164 (YGYI…PLPE), 179-199 (IQPA…VLVA), 222-242 (LAPL…EKDL), 243-263 (GTSL…TQRL), 264-284 (SWVI…YFTF), 308-328 (IVQS…LGNG), 340-360 (FIIA…LLML), 382-402 (LLAA…SGGV), and 414-434 (PWMS…AILA).

It belongs to the SEDS family.

The protein resides in the cell inner membrane. It carries out the reaction [GlcNAc-(1-&gt;4)-Mur2Ac(oyl-L-Ala-gamma-D-Glu-L-Lys-D-Ala-D-Ala)](n)-di-trans,octa-cis-undecaprenyl diphosphate + beta-D-GlcNAc-(1-&gt;4)-Mur2Ac(oyl-L-Ala-gamma-D-Glu-L-Lys-D-Ala-D-Ala)-di-trans,octa-cis-undecaprenyl diphosphate = [GlcNAc-(1-&gt;4)-Mur2Ac(oyl-L-Ala-gamma-D-Glu-L-Lys-D-Ala-D-Ala)](n+1)-di-trans,octa-cis-undecaprenyl diphosphate + di-trans,octa-cis-undecaprenyl diphosphate + H(+). It participates in cell wall biogenesis; peptidoglycan biosynthesis. Its function is as follows. Transglycosylase involved in peptidoglycan cell wall formation. Required for the regulation of cell length. The chain is Peptidoglycan glycosyltransferase RodA (rodA) from Mycobacterium leprae (strain TN).